The chain runs to 184 residues: RNA polymerase sigma factor HrpL (184 aa).

The Polymerase core binding signature appears at D49 to E62. The H-T-H motif DNA-binding region spans Y151–S170.

It belongs to the sigma-70 factor family. ECF subfamily.

Sigma factors are initiation factors that promote the attachment of RNA polymerase to specific initiation sites and are then released. This sigma factor is involved in the activation of hprD as well as other hrp loci which are involved in plant pathogenicity, hrmA and avr genes. The sequence is that of RNA polymerase sigma factor HrpL (hrpL) from Pseudomonas syringae pv. syringae.